A 753-amino-acid chain; its full sequence is 5-methyltetrahydropteroyltriglutamate--homocysteine methyltransferase (753 aa).

5-methyltetrahydropteroyltri-L-glutamate is bound by residues 17–20 (RELK) and Lys117. L-homocysteine contacts are provided by residues 431 to 433 (IGS) and Glu484. Residues 431-433 (IGS) and Glu484 each bind L-methionine. 5-methyltetrahydropteroyltri-L-glutamate contacts are provided by residues 515 to 516 (RC) and Trp561. Asp599 contributes to the L-homocysteine binding site. Residue Asp599 participates in L-methionine binding. 5-methyltetrahydropteroyltri-L-glutamate is bound at residue Glu605. The Zn(2+) site is built by His641, Cys643, and Glu665. His694 acts as the Proton donor in catalysis. Residue Cys726 participates in Zn(2+) binding.

This sequence belongs to the vitamin-B12 independent methionine synthase family. It depends on Zn(2+) as a cofactor.

The catalysed reaction is 5-methyltetrahydropteroyltri-L-glutamate + L-homocysteine = tetrahydropteroyltri-L-glutamate + L-methionine. Its pathway is amino-acid biosynthesis; L-methionine biosynthesis via de novo pathway; L-methionine from L-homocysteine (MetE route): step 1/1. Catalyzes the transfer of a methyl group from 5-methyltetrahydrofolate to homocysteine resulting in methionine formation. In Escherichia coli O157:H7 (strain EC4115 / EHEC), this protein is 5-methyltetrahydropteroyltriglutamate--homocysteine methyltransferase.